The primary structure comprises 76 residues: Exodeoxyribonuclease 7 small subunit (76 aa).

The protein belongs to the XseB family. In terms of assembly, heterooligomer composed of large and small subunits.

The protein resides in the cytoplasm. The catalysed reaction is Exonucleolytic cleavage in either 5'- to 3'- or 3'- to 5'-direction to yield nucleoside 5'-phosphates.. Its function is as follows. Bidirectionally degrades single-stranded DNA into large acid-insoluble oligonucleotides, which are then degraded further into small acid-soluble oligonucleotides. This Enterococcus faecalis (strain ATCC 700802 / V583) protein is Exodeoxyribonuclease 7 small subunit.